A 73-amino-acid polypeptide reads, in one-letter code: N-terminal-borealin-like protein (73 aa).

The protein belongs to the borealin family. In terms of assembly, component of the aurora kinase complex composed of at least BIR1, BNL1, IPL1 and SLI15.

It is found in the nucleus. Its subcellular location is the cytoplasm. The protein resides in the cytoskeleton. It localises to the spindle. Component of the aurora kinase complex, also called chromosomal passenger complex (CPC), essential for chromosome segregation and metaphase chromosome alignment. Mediates the SLI15-BIR1 interaction within the CPC. This Saccharomyces cerevisiae (strain ATCC 204508 / S288c) (Baker's yeast) protein is N-terminal-borealin-like protein (NBL1).